The primary structure comprises 356 residues: Zinc finger CW-type PWWP domain protein 2 (356 aa).

A CW-type zinc finger spans residues 24-79 (MYVNKVWVQCENENCLKWRLLSSEDSAKVDHDEPWYCFMNTDSRYNNCSISEEDFP). Residues Cys33, Cys38, Cys60, and Cys71 each contribute to the Zn(2+) site. The 65-residue stretch at 98–162 (LGSLVLVKLQ…ATFVGHYSIT (65 aa)) folds into the PWWP domain. The disordered stretch occupies residues 279-307 (QALQPTATPDESEEGHGEEINMGEKLSKC).

Its function is as follows. Histone methylation reader which binds to non-methylated (H3K4me0), monomethylated (H3K4me1), dimethylated (H3K4me2) and trimethylated (H3K4me3) 'Lys-4' on histone H3. The order of binding preference is H3K4me3 &gt; H3K4me2 &gt; H3K4me1 &gt; H3K4me0. This Homo sapiens (Human) protein is Zinc finger CW-type PWWP domain protein 2 (ZCWPW2).